A 454-amino-acid chain; its full sequence is Tol-Pal system protein TolB (454 aa).

The signal sequence occupies residues 1–21; that stretch reads MSLRPISLMLALLLTSAPALA.

The protein belongs to the TolB family. In terms of assembly, the Tol-Pal system is composed of five core proteins: the inner membrane proteins TolA, TolQ and TolR, the periplasmic protein TolB and the outer membrane protein Pal. They form a network linking the inner and outer membranes and the peptidoglycan layer.

The protein localises to the periplasm. In terms of biological role, part of the Tol-Pal system, which plays a role in outer membrane invagination during cell division and is important for maintaining outer membrane integrity. The sequence is that of Tol-Pal system protein TolB from Sphingopyxis alaskensis (strain DSM 13593 / LMG 18877 / RB2256) (Sphingomonas alaskensis).